Reading from the N-terminus, the 216-residue chain is Uracil phosphoribosyltransferase (216 aa).

A GTP-binding site is contributed by 30-34 (KNLVR). 5-phospho-alpha-D-ribose 1-diphosphate is bound by residues R80, R105, and 140-148 (DPMIATAST). Residues I203 and 208-210 (GDA) contribute to the uracil site. 5-phospho-alpha-D-ribose 1-diphosphate is bound at residue D209.

This sequence belongs to the UPRTase family. Mg(2+) is required as a cofactor.

It catalyses the reaction UMP + diphosphate = 5-phospho-alpha-D-ribose 1-diphosphate + uracil. Its pathway is pyrimidine metabolism; UMP biosynthesis via salvage pathway; UMP from uracil: step 1/1. Allosterically activated by GTP. Catalyzes the conversion of uracil and 5-phospho-alpha-D-ribose 1-diphosphate (PRPP) to UMP and diphosphate. In Saccharolobus islandicus (strain Y.N.15.51 / Yellowstone #2) (Sulfolobus islandicus), this protein is Uracil phosphoribosyltransferase.